A 1526-amino-acid chain; its full sequence is High affinity cGMP-specific 3',5'-cyclic phosphodiesterase 9A (1526 aa).

Over residues 1–43 (MYQDSGCSSSSSRRGSSSAAAATSTAATAAETAAAAAATTTSS) the composition is skewed to low complexity. 3 disordered regions span residues 1–48 (MYQD…DEET), 266–348 (SSRS…SGTA), and 393–476 (RHHH…ASDC). Basic and acidic residues-rich tracts occupy residues 270-282 (RSSE…HEQD) and 305-314 (EHPSEKPERT). Low complexity-rich tracts occupy residues 324–348 (IAVT…SGTA) and 401–440 (QQHQ…ATAT). Over residues 441 to 462 (PSVEQPATSGTTNIHLQPTSLP) the composition is skewed to polar residues. Residues 664–985 (VKRRFLEICD…EYYRRLNDAQ (322 aa)) enclose the PDEase domain. The active-site Proton donor is the H740. 740-744 (HNFRH) provides a ligand contact to 3',5'-cyclic GMP. 4 residues coordinate Zn(2+): H744, H780, D781, and D890. 2 residues coordinate 3',5'-cyclic GMP: D781 and D890. D781 lines the Mg(2+) pocket. 5 disordered regions span residues 986-1170 (TKTR…SSGG), 1265-1284 (TEAD…KKIP), 1314-1351 (SNGS…GSSW), 1372-1406 (RFGS…DGLG), and 1469-1496 (RYSS…LTTG). Low complexity predominate over residues 993 to 1005 (ADSNTSATSDSNS). The span at 1033-1057 (NSQGSGGGGGGGGGGGAGGGTGSGC) shows a compositional bias: gly residues. Residues 1065 to 1093 (VSPQMPRSGSGISVKSRRSIPSQKSASRT) show a composition bias toward polar residues. The span at 1125-1136 (VAEKTSKFKVDT) shows a compositional bias: basic and acidic residues. Residues 1139–1148 (SSNRSKSSHS) are compositionally biased toward low complexity. Positions 1314–1324 (SNGSTRSSASS) are enriched in low complexity. A compositionally biased stretch (gly residues) spans 1325-1340 (GRGGSGVPGGSGGSGM). Composition is skewed to low complexity over residues 1341 to 1350 (PGPSAGSGSS) and 1375 to 1397 (STRS…NANG). Polar residues predominate over residues 1470–1486 (YSSNDSSRHPSNNTLQS).

The protein belongs to the cyclic nucleotide phosphodiesterase family. PDE9 subfamily. Requires Zn(2+) as cofactor. It depends on Mg(2+) as a cofactor. Expressed in Malpighian tubules and adult fly head.

The enzyme catalyses 3',5'-cyclic GMP + H2O = GMP + H(+). Its pathway is purine metabolism; 3',5'-cyclic GMP degradation; GMP from 3',5'-cyclic GMP: step 1/1. Specifically hydrolyzes the second messenger cGMP, which is a key regulator of many important physiological processes. Highly specific: compared to other members of the cyclic nucleotide phosphodiesterase family, has the highest affinity and selectivity for cGMP. In Drosophila melanogaster (Fruit fly), this protein is High affinity cGMP-specific 3',5'-cyclic phosphodiesterase 9A.